The chain runs to 620 residues: Guanylate cyclase soluble subunit beta-1 (620 aa).

H105 contributes to the heme binding site. A Guanylate cyclase domain is found at 421–554; it reads TILFSGIVGF…NTVNLTSRTE (134 aa).

This sequence belongs to the adenylyl cyclase class-4/guanylyl cyclase family. As to quaternary structure, the active enzyme is formed by a heterodimer of an alpha and a beta subunit. Heterodimer with GUCY1A1. Can also form inactive homodimers in vitro. Heme serves as cofactor.

It localises to the cytoplasm. It carries out the reaction GTP = 3',5'-cyclic GMP + diphosphate. Activated by nitric oxide in the presence of magnesium or manganese ions. Mediates responses to nitric oxide (NO) by catalyzing the biosynthesis of the signaling molecule cGMP. This Mus musculus (Mouse) protein is Guanylate cyclase soluble subunit beta-1 (Gucy1b1).